Consider the following 607-residue polypeptide: CUB and zona pellucida-like domain-containing protein 1 (607 aa).

The signal sequence occupies residues 1-19; it reads MEVTGRLFIWAILAVSCGA. The cysteines at positions 17 and 58 are disulfide-linked. 2 consecutive CUB domains span residues 20 to 146 and 154 to 265; these read QLNS…YFFS and CGGD…YTSI. At 20 to 568 the chain is on the lumenal side; it reads QLNSTEAEGK…AEISNQPLSR (549 aa). N-linked (GlcNAc...) asparagine glycans are attached at residues Asn-22, Asn-57, and Asn-67. 3 cysteine pairs are disulfide-bonded: Cys-85-Cys-107, Cys-154-Cys-180, and Cys-207-Cys-229. Positions 276 to 519 constitute a ZP domain; it reads SCVSDKMRVI…SRCNQGCVPR (244 aa). Asn-419 carries N-linked (GlcNAc...) asparagine glycosylation. A disulfide bridge connects residues Cys-442 and Cys-498. Residues 569-589 traverse the membrane as a helical segment; that stretch reads LYLFSFMVLALNVVIVAITTV. The Cytoplasmic segment spans residues 590-607; the sequence is KHFLNRWMDHRYQKLQVY.

In terms of tissue distribution, highly expressed in pancreatic acinar cells. Also expressed in epithelium of the uterus during late pregnancy but not detected in non-pregnant uterus or in a variety of other adult and fetal tissues.

Its subcellular location is the zymogen granule membrane. Its function is as follows. Localized to zymogen granules, where it functions in trypsinogen activation. May indirectly regulate cell motility, cell-cell and cell/extracellular matrix interactions. The chain is CUB and zona pellucida-like domain-containing protein 1 from Mus musculus (Mouse).